A 521-amino-acid polypeptide reads, in one-letter code: Probable tRNA (uracil-O(2)-)-methyltransferase (521 aa).

The protein belongs to the TRM44 family.

It is found in the cytoplasm. It carries out the reaction uridine(44) in tRNA(Ser) + S-adenosyl-L-methionine = 2'-O-methyluridine(44) in tRNA(Ser) + S-adenosyl-L-homocysteine + H(+). Functionally, probable adenosyl-L-methionine (AdoMet)-dependent tRNA (uracil-O(2)-)-methyltransferase. The protein is Probable tRNA (uracil-O(2)-)-methyltransferase (trmt44) of Drosophila melanogaster (Fruit fly).